A 132-amino-acid chain; its full sequence is Small ribosomal subunit protein uS12 (132 aa).

D89 is subject to 3-methylthioaspartic acid. The disordered stretch occupies residues 101–132 (TLDASGAAGPSSTNKATRNRKRSKYGVKRPKA). The segment covering 117–132 (TRNRKRSKYGVKRPKA) has biased composition (basic residues).

It belongs to the universal ribosomal protein uS12 family. In terms of assembly, part of the 30S ribosomal subunit. Contacts proteins S8 and S17. May interact with IF1 in the 30S initiation complex.

With S4 and S5 plays an important role in translational accuracy. In terms of biological role, interacts with and stabilizes bases of the 16S rRNA that are involved in tRNA selection in the A site and with the mRNA backbone. Located at the interface of the 30S and 50S subunits, it traverses the body of the 30S subunit contacting proteins on the other side and probably holding the rRNA structure together. The combined cluster of proteins S8, S12 and S17 appears to hold together the shoulder and platform of the 30S subunit. This Sorangium cellulosum (strain So ce56) (Polyangium cellulosum (strain So ce56)) protein is Small ribosomal subunit protein uS12.